Here is a 103-residue protein sequence, read N- to C-terminus: Flagellar hook-basal body complex protein FliE (103 aa).

This sequence belongs to the FliE family.

The protein resides in the bacterial flagellum basal body. The sequence is that of Flagellar hook-basal body complex protein FliE from Cronobacter sakazakii (strain ATCC BAA-894) (Enterobacter sakazakii).